The following is a 208-amino-acid chain: Imidazoleglycerol-phosphate dehydratase (208 aa).

This sequence belongs to the imidazoleglycerol-phosphate dehydratase family.

The protein localises to the cytoplasm. The enzyme catalyses D-erythro-1-(imidazol-4-yl)glycerol 3-phosphate = 3-(imidazol-4-yl)-2-oxopropyl phosphate + H2O. It functions in the pathway amino-acid biosynthesis; L-histidine biosynthesis; L-histidine from 5-phospho-alpha-D-ribose 1-diphosphate: step 6/9. In Mycobacterium sp. (strain JLS), this protein is Imidazoleglycerol-phosphate dehydratase.